Consider the following 278-residue polypeptide: Hydroxyethylthiazole kinase (278 aa).

M46 lines the substrate pocket. 2 residues coordinate ATP: R122 and T168. G195 provides a ligand contact to substrate.

This sequence belongs to the Thz kinase family. Mg(2+) serves as cofactor.

The enzyme catalyses 5-(2-hydroxyethyl)-4-methylthiazole + ATP = 4-methyl-5-(2-phosphooxyethyl)-thiazole + ADP + H(+). Its pathway is cofactor biosynthesis; thiamine diphosphate biosynthesis; 4-methyl-5-(2-phosphoethyl)-thiazole from 5-(2-hydroxyethyl)-4-methylthiazole: step 1/1. Catalyzes the phosphorylation of the hydroxyl group of 4-methyl-5-beta-hydroxyethylthiazole (THZ). The chain is Hydroxyethylthiazole kinase from Chloroflexus aggregans (strain MD-66 / DSM 9485).